The sequence spans 452 residues: Coiled-coil domain-containing protein 71 (452 aa).

Positions P81–A106 are disordered. Low complexity predominate over residues Q87–A106. S129 carries the post-translational modification Phosphoserine. Disordered regions lie at residues P209–S256 and A322–G404. Residues K279–Q344 adopt a coiled-coil conformation. Over residues K332–Q344 the composition is skewed to low complexity. A compositionally biased stretch (basic and acidic residues) spans R377–P386.

The sequence is that of Coiled-coil domain-containing protein 71 (CCDC71) from Bos taurus (Bovine).